A 1258-amino-acid polypeptide reads, in one-letter code: Cohesin subunit SA-1 (1258 aa).

A disordered region spans residues 1–59; that stretch reads MITSELPVLQDSTNETTAHSDAGSELEETEVKGKRKRGRPGRPPSTNKKPRKSPGEKSR. Residues 10–19 show a composition bias toward polar residues; sequence QDSTNETTAH. The residue at position 24 (serine 24) is a Phosphoserine. The SCD domain occupies 296 to 381; the sequence is FVHRYRDAIA…NRFKDRIVSM (86 aa). Residues serine 756, serine 1062, and serine 1065 each carry the phosphoserine modification. The tract at residues 1055-1148 is disordered; that stretch reads GGEDDRMSVN…EHGSEPDFLH (94 aa). The span at 1062 to 1075 shows a compositional bias: low complexity; sequence SVNSGSSSSKTSSV. Over residues 1076 to 1087 the composition is skewed to basic residues; it reads RSKKGRPPLHRK. The residue at position 1093 (serine 1093) is a Phosphoserine. The span at 1095-1106 shows a compositional bias: polar residues; the sequence is DNTWLNRTDTMI. Residues 1137–1146 show a composition bias toward basic and acidic residues; sequence ESEHGSEPDF. A Glycyl lysine isopeptide (Lys-Gly) (interchain with G-Cter in SUMO2) cross-link involves residue lysine 1161.

The protein belongs to the SCC3 family. Cohesin complexes are composed of a heterodimer between a SMC1 protein (SMC1A or SMC1B) and SMC3, which are attached via their hinge domain, and RAD21 which link them at their heads, and one STAG protein (STAG1, STAG2 or STAG3). In cohesin complexes, STAG1 is mutually exclusive with STAG2 and STAG3. Interacts directly with RAD21 in cohesin complex. The cohesin complex interacts with the cohesin loading complex subunits NIPBL/Scc2 (via HEAT repeats) and MAU2/Scc4. NIPBL directly contacts all members of the complex, RAD21, SMC1A/B, SMC3 and STAG1. Post-translationally, phosphorylated by PLK1. The large dissociation of cohesin from chromosome arms during prophase is partly due to its phosphorylation.

The protein resides in the nucleus. It is found in the chromosome. Component of cohesin complex, a complex required for the cohesion of sister chromatids after DNA replication. The cohesin complex apparently forms a large proteinaceous ring within which sister chromatids can be trapped. At anaphase, the complex is cleaved and dissociates from chromatin, allowing sister chromatids to segregate. The cohesin complex may also play a role in spindle pole assembly during mitosis. The protein is Cohesin subunit SA-1 (Stag1) of Mus musculus (Mouse).